Here is a 515-residue protein sequence, read N- to C-terminus: MTDRVIIFDTTLRDGEQALKASLTVKEKLQIALALERLGVDVMEVGFPVSSQGDFESVQTIARHIKNARVTALSRAVDKDIDAAYEALKVAEAFRIHTFIASSALHVEAKLKRSFDDVVGMAVAAVKRARNYTDDVEFSCEDAGRTGIDNICRIVEAAINAGATTVNIPDTVGFCLPNEYGNIIAQVRNRVPNIDKAVISVHCHNDLGMATANSLTAVQNGARQIECTINGIGERAGNTSLEEVVMAMKVRQDFMGVDTRINTQEIHRVSQMVSQLCNMPIQPNKAIVGSNAFAHSSGIHQDGMLKNKNTYEIMSPETIGLKKEKLNLTARSGRAAVKGHMADMGYNEQDYDLDKLYDAFLKLADKKGQVFDYDLEALAFIDMQQGDEDRLVLDKLSAHSTKEYPATAFVQLKLDGNKLITSSIGGNGPVDAVYNAILNLTGLEIKMSHYNLTAKGEGAEALGQVDIVVEHKGRKFHGVGLATDIVESSALALVHAINAIYRAHKVADIKNHKHH.

The region spanning 5–267 (VIIFDTTLRD…DTRINTQEIH (263 aa)) is the Pyruvate carboxyltransferase domain. Mn(2+) contacts are provided by D14, H202, H204, and N238. The segment at 392–515 (VLDKLSAHST…VADIKNHKHH (124 aa)) is regulatory domain.

This sequence belongs to the alpha-IPM synthase/homocitrate synthase family. LeuA type 1 subfamily. As to quaternary structure, homodimer. Mn(2+) serves as cofactor.

The protein localises to the cytoplasm. The enzyme catalyses 3-methyl-2-oxobutanoate + acetyl-CoA + H2O = (2S)-2-isopropylmalate + CoA + H(+). Its pathway is amino-acid biosynthesis; L-leucine biosynthesis; L-leucine from 3-methyl-2-oxobutanoate: step 1/4. Its function is as follows. Catalyzes the condensation of the acetyl group of acetyl-CoA with 3-methyl-2-oxobutanoate (2-ketoisovalerate) to form 3-carboxy-3-hydroxy-4-methylpentanoate (2-isopropylmalate). This chain is 2-isopropylmalate synthase, found in Haemophilus influenzae (strain PittEE).